Here is a 280-residue protein sequence, read N- to C-terminus: Orotidine 5'-phosphate decarboxylase (280 aa).

Substrate is bound by residues aspartate 40, 62–64, 93–102, tyrosine 228, and arginine 246; these read KTH and DRKFVDIGNT. Residue lysine 95 is the Proton donor of the active site.

It belongs to the OMP decarboxylase family.

The catalysed reaction is orotidine 5'-phosphate + H(+) = UMP + CO2. It functions in the pathway pyrimidine metabolism; UMP biosynthesis via de novo pathway; UMP from orotate: step 2/2. The polypeptide is Orotidine 5'-phosphate decarboxylase (PYRG) (Solorina crocea).